The primary structure comprises 412 residues: Divalent metal cation transporter MntH (412 aa).

The Cytoplasmic portion of the chain corresponds to 1–19; sequence MTNYRVESSSGRAARKMRL. The helical transmembrane segment at 20–39 threads the bilayer; it reads ALMGPAFIAAIGYIDPGNFA. At 40-51 the chain is on the periplasmic side; that stretch reads TNIQAGASFGYQ. Residues 52 to 71 traverse the membrane as a helical segment; that stretch reads LLWVVVWANLMAMLIQILSA. The Cytoplasmic portion of the chain corresponds to 72 to 95; that stretch reads KLGIATGKNLAEQIRDHYPRPVVW. The chain crosses the membrane as a helical span at residues 96–118; it reads FYWVQAEIIAMATDLAEFIGAAI. The Periplasmic portion of the chain corresponds to 119–125; sequence GFKLILG. A helical transmembrane segment spans residues 126 to 145; that stretch reads VSLLQGAVLTGIATFLILML. The Cytoplasmic segment spans residues 146–155; the sequence is QRRGQKPLEK. A helical membrane pass occupies residues 156–175; that stretch reads VIGGLLLFVAAAYIVELIFS. The Periplasmic segment spans residues 176–196; it reads QPNLAQLGKGMVIPSLPTSEA. Residues 197-220 form a helical membrane-spanning segment; the sequence is VFLAAGVLGATIMPHVIYLHSSLT. The Cytoplasmic portion of the chain corresponds to 221–238; sequence QHLHGGSRQQRYSATKWD. Residues 239-258 traverse the membrane as a helical segment; that stretch reads VAIAMTIAGFVNLAMMATAA. The Periplasmic segment spans residues 259–276; the sequence is AAFHFSGHTGVADLDEAY. The helical transmembrane segment at 277–297 threads the bilayer; that stretch reads LTLQPLLSHAAATVFGLSLVA. The Cytoplasmic segment spans residues 298–327; that stretch reads AGLSSTVVGTLAGQVVMQGFIRFHIPLWVR. The chain crosses the membrane as a helical span at residues 328–344; sequence RTVTMLPSFIVILMGLD. The Periplasmic portion of the chain corresponds to 345–350; the sequence is PTRILV. Residues 351–370 traverse the membrane as a helical segment; that stretch reads MSQVLLSFGIALALVPLLIF. The Cytoplasmic portion of the chain corresponds to 371–387; the sequence is TSDSKLMGDLVNSKRVK. Residues 388–406 traverse the membrane as a helical segment; the sequence is QTGWVIVVLVVALNIWLLV. Residues 407–412 are Periplasmic-facing; the sequence is GTALGL.

This sequence belongs to the NRAMP family.

It localises to the cell inner membrane. Functionally, h(+)-stimulated, divalent metal cation uptake system. The chain is Divalent metal cation transporter MntH from Escherichia fergusonii (strain ATCC 35469 / DSM 13698 / CCUG 18766 / IAM 14443 / JCM 21226 / LMG 7866 / NBRC 102419 / NCTC 12128 / CDC 0568-73).